An 86-amino-acid chain; its full sequence is Large ribosomal subunit protein eL31 (86 aa).

Belongs to the eukaryotic ribosomal protein eL31 family.

This Methanopyrus kandleri (strain AV19 / DSM 6324 / JCM 9639 / NBRC 100938) protein is Large ribosomal subunit protein eL31.